The sequence spans 152 residues: Ribonuclease pancreatic gamma-type (152 aa).

The signal sequence occupies residues 1 to 25; sequence MGLEKSLFLFSLLVLVLGWVQPSLG. 2 residues coordinate substrate: Lys35 and Arg38. The Proton acceptor role is filled by His40. 4 disulfides stabilise this stretch: Cys54/Cys112, Cys68/Cys123, Cys86/Cys138, and Cys93/Cys100. Substrate-binding positions include 69 to 73, Lys94, and Arg113; that span reads KSMNT. Residue His147 is the Proton donor of the active site.

This sequence belongs to the pancreatic ribonuclease family. As to quaternary structure, monomer.

It is found in the secreted. The enzyme catalyses an [RNA] containing cytidine + H2O = an [RNA]-3'-cytidine-3'-phosphate + a 5'-hydroxy-ribonucleotide-3'-[RNA].. The catalysed reaction is an [RNA] containing uridine + H2O = an [RNA]-3'-uridine-3'-phosphate + a 5'-hydroxy-ribonucleotide-3'-[RNA].. Its function is as follows. Endonuclease that catalyzes the cleavage of RNA on the 3' side of pyrimidine nucleotides. Acts on single-stranded and double-stranded RNA. The sequence is that of Ribonuclease pancreatic gamma-type from Rattus norvegicus (Rat).